The following is a 374-amino-acid chain: Ribosomal RNA large subunit methyltransferase G (374 aa).

It belongs to the methyltransferase superfamily. RlmG family.

The protein localises to the cytoplasm. The catalysed reaction is guanosine(1835) in 23S rRNA + S-adenosyl-L-methionine = N(2)-methylguanosine(1835) in 23S rRNA + S-adenosyl-L-homocysteine + H(+). Functionally, specifically methylates the guanine in position 1835 (m2G1835) of 23S rRNA. In Pseudomonas fluorescens (strain Pf0-1), this protein is Ribosomal RNA large subunit methyltransferase G.